The primary structure comprises 198 residues: Probable chemoreceptor glutamine deamidase CheD (198 aa).

Belongs to the CheD family.

It catalyses the reaction L-glutaminyl-[protein] + H2O = L-glutamyl-[protein] + NH4(+). Functionally, probably deamidates glutamine residues to glutamate on methyl-accepting chemotaxis receptors (MCPs), playing an important role in chemotaxis. The chain is Probable chemoreceptor glutamine deamidase CheD from Stenotrophomonas maltophilia (strain K279a).